Reading from the N-terminus, the 199-residue chain is Ras-related and estrogen-regulated growth inhibitor (199 aa).

Residues 13–20 (GRAGVGKS), 60–64 (DTAGQ), and 118–121 (NKAD) each bind GTP.

This sequence belongs to the small GTPase superfamily. Ras family.

It is found in the cytoplasm. The catalysed reaction is GTP + H2O = GDP + phosphate + H(+). Binds GDP/GTP and possesses intrinsic GTPase activity. Has higher affinity for GDP than for GTP. This Bos taurus (Bovine) protein is Ras-related and estrogen-regulated growth inhibitor (RERG).